The sequence spans 458 residues: ATP synthase subunit beta (458 aa).

Gly148–Thr155 provides a ligand contact to ATP.

The protein belongs to the ATPase alpha/beta chains family. As to quaternary structure, F-type ATPases have 2 components, CF(1) - the catalytic core - and CF(0) - the membrane proton channel. CF(1) has five subunits: alpha(3), beta(3), gamma(1), delta(1), epsilon(1). CF(0) has three main subunits: a(1), b(2) and c(9-12). The alpha and beta chains form an alternating ring which encloses part of the gamma chain. CF(1) is attached to CF(0) by a central stalk formed by the gamma and epsilon chains, while a peripheral stalk is formed by the delta and b chains.

Its subcellular location is the cell inner membrane. The catalysed reaction is ATP + H2O + 4 H(+)(in) = ADP + phosphate + 5 H(+)(out). Functionally, produces ATP from ADP in the presence of a proton gradient across the membrane. The catalytic sites are hosted primarily by the beta subunits. The chain is ATP synthase subunit beta from Ectopseudomonas mendocina (strain ymp) (Pseudomonas mendocina).